The sequence spans 140 residues: Phospholipase A2 (140 aa).

The first 21 residues, Met-1–Ser-21, serve as a signal peptide directing secretion. The propeptide occupies Ile-22 to Leu-27. 7 cysteine pairs are disulfide-bonded: Cys-38–Cys-97, Cys-52–Cys-139, Cys-54–Cys-70, Cys-69–Cys-125, Cys-76–Cys-118, Cys-86–Cys-111, and Cys-104–Cys-116. N-linked (GlcNAc...) asparagine glycosylation occurs at Asn-39. Positions 53, 55, and 57 each coordinate Ca(2+). His-73 is an active-site residue. Asp-74 serves as a coordination point for Ca(2+). A glycan (N-linked (GlcNAc...) asparagine) is linked at Asn-107. Residue Asp-119 is part of the active site.

It belongs to the phospholipase A2 family. Group I subfamily. D49 sub-subfamily. It depends on Ca(2+) as a cofactor. As to expression, expressed by the venom gland.

It is found in the secreted. It catalyses the reaction a 1,2-diacyl-sn-glycero-3-phosphocholine + H2O = a 1-acyl-sn-glycero-3-phosphocholine + a fatty acid + H(+). Functionally, PLA2 catalyzes the calcium-dependent hydrolysis of the 2-acyl groups in 3-sn-phosphoglycerides. This is Phospholipase A2 from Micrurus altirostris (Uruguayan coral snake).